The sequence spans 149 residues: Transcription antitermination protein NusB (149 aa).

The protein belongs to the NusB family.

Functionally, involved in transcription antitermination. Required for transcription of ribosomal RNA (rRNA) genes. Binds specifically to the boxA antiterminator sequence of the ribosomal RNA (rrn) operons. The chain is Transcription antitermination protein NusB from Hahella chejuensis (strain KCTC 2396).